The following is a 147-amino-acid chain: Small ribosomal subunit protein uS5 (147 aa).

The 64-residue stretch at 9-72 folds into the S5 DRBM domain; sequence FQEVVVNIGR…DDAFKNLIHV (64 aa).

It belongs to the universal ribosomal protein uS5 family. In terms of assembly, part of the 30S ribosomal subunit. Contacts proteins S4 and S8.

Its function is as follows. With S4 and S12 plays an important role in translational accuracy. In terms of biological role, located at the back of the 30S subunit body where it stabilizes the conformation of the head with respect to the body. The protein is Small ribosomal subunit protein uS5 of Helicobacter pylori (strain J99 / ATCC 700824) (Campylobacter pylori J99).